A 293-amino-acid chain; its full sequence is ATP synthase gamma chain (293 aa).

The protein belongs to the ATPase gamma chain family. As to quaternary structure, F-type ATPases have 2 components, CF(1) - the catalytic core - and CF(0) - the membrane proton channel. CF(1) has five subunits: alpha(3), beta(3), gamma(1), delta(1), epsilon(1). CF(0) has three main subunits: a, b and c.

It localises to the cell inner membrane. In terms of biological role, produces ATP from ADP in the presence of a proton gradient across the membrane. The gamma chain is believed to be important in regulating ATPase activity and the flow of protons through the CF(0) complex. The sequence is that of ATP synthase gamma chain from Psychrobacter sp. (strain PRwf-1).